Consider the following 143-residue polypeptide: Large-conductance mechanosensitive channel (143 aa).

The next 3 membrane-spanning stretches (helical) occupy residues 21-41 (VGVI…ADII), 44-64 (VVGL…LGTV), and 86-106 (GNFI…FMMV).

The protein belongs to the MscL family. Homopentamer.

It is found in the cell inner membrane. In terms of biological role, channel that opens in response to stretch forces in the membrane lipid bilayer. May participate in the regulation of osmotic pressure changes within the cell. The chain is Large-conductance mechanosensitive channel from Variovorax paradoxus (strain S110).